Reading from the N-terminus, the 268-residue chain is Tryptophan synthase alpha chain (268 aa).

Active-site proton acceptor residues include Glu49 and Asp60.

Belongs to the TrpA family. In terms of assembly, tetramer of two alpha and two beta chains.

The catalysed reaction is (1S,2R)-1-C-(indol-3-yl)glycerol 3-phosphate + L-serine = D-glyceraldehyde 3-phosphate + L-tryptophan + H2O. The protein operates within amino-acid biosynthesis; L-tryptophan biosynthesis; L-tryptophan from chorismate: step 5/5. Its function is as follows. The alpha subunit is responsible for the aldol cleavage of indoleglycerol phosphate to indole and glyceraldehyde 3-phosphate. The polypeptide is Tryptophan synthase alpha chain (Pectobacterium atrosepticum (strain SCRI 1043 / ATCC BAA-672) (Erwinia carotovora subsp. atroseptica)).